A 304-amino-acid polypeptide reads, in one-letter code: Negative regulator of the PHO system (304 aa).

The 291-residue stretch at 7-297 (FKQLEKVGNG…AKDALNHPWF (291 aa)) folds into the Protein kinase domain. Residues 13-21 (VGNGTYATV) and Lys-36 contribute to the ATP site. The Proton acceptor role is filled by Asp-133.

Belongs to the protein kinase superfamily. CMGC Ser/Thr protein kinase family. CDC2/CDKX subfamily. Interacts with a number of cyclins.

It carries out the reaction L-seryl-[protein] + ATP = O-phospho-L-seryl-[protein] + ADP + H(+). The enzyme catalyses L-threonyl-[protein] + ATP = O-phospho-L-threonyl-[protein] + ADP + H(+). In terms of biological role, when phosphate concentrations are high it phosphorylates the PHO4 transcription factor thus establishing repression. In Kluyveromyces lactis (strain ATCC 8585 / CBS 2359 / DSM 70799 / NBRC 1267 / NRRL Y-1140 / WM37) (Yeast), this protein is Negative regulator of the PHO system (PHO85).